The sequence spans 353 residues: UPF0283 membrane protein YcjF (353 aa).

Helical transmembrane passes span 70-90 (MVMG…VQWT), 100-120 (VALG…GSVV), and 213-233 (ESTL…FIAW).

The protein belongs to the UPF0283 family.

It localises to the cell inner membrane. This chain is UPF0283 membrane protein YcjF, found in Escherichia fergusonii (strain ATCC 35469 / DSM 13698 / CCUG 18766 / IAM 14443 / JCM 21226 / LMG 7866 / NBRC 102419 / NCTC 12128 / CDC 0568-73).